The following is a 68-amino-acid chain: uncharacterized protein (68 aa).

This is an uncharacterized protein from Rickettsia prowazekii (strain Madrid E).